We begin with the raw amino-acid sequence, 319 residues long: ADP-ribosyl cyclase/cyclic ADP-ribose hydrolase 2 (319 aa).

Residues 1 to 33 (MAVQACALSLRLGLWMSLLLPVLPGAGARAAGA) form the signal peptide. 3 disulfide bridges follow: C52–C68, C84–C164, and C145–C158. N-linked (GlcNAc...) asparagine glycosylation is found at N67 and N96. Residue W110 coordinates NAD(+). Residue W110 coordinates nicotinamide. N149 carries N-linked (GlcNAc...) asparagine glycosylation. An NAD(+)-binding site is contributed by W173. N193 carries an N-linked (GlcNAc...) asparagine glycan. NAD(+) is bound at residue E211. 2 disulfides stabilise this stretch: C239–C260 and C272–C281. S294 is lipidated: GPI-anchor amidated serine. The propeptide occupies 295–319 (PALHAIGDISLIISLLVALASSSQA).

This sequence belongs to the ADP-ribosyl cyclase family. In terms of assembly, homodimer. As to expression, pancreatic islets, kidney, spleen, heart, thymus, intestine and salivary gland.

It is found in the cell membrane. The catalysed reaction is NAD(+) + H2O = ADP-D-ribose + nicotinamide + H(+). The enzyme catalyses NAD(+) = cyclic ADP-beta-D-ribose + nicotinamide + H(+). It catalyses the reaction cyclic ADP-beta-D-ribose + H2O = ADP-D-ribose. In terms of biological role, catalyzes both the synthesis of cyclic ADP-beta-D-ribose (cADPR) from NAD(+), and its hydrolysis to ADP-D-ribose (ADPR). Cyclic ADPR is known to serve as an endogenous second messenger that elicits calcium release from intracellular stores, and thus regulates the mobilization of intracellular calcium. May be involved in pre-B-cell growth. The chain is ADP-ribosyl cyclase/cyclic ADP-ribose hydrolase 2 (Bst1) from Rattus norvegicus (Rat).